The chain runs to 116 residues: Large ribosomal subunit protein uL18 (116 aa).

It belongs to the universal ribosomal protein uL18 family. As to quaternary structure, part of the 50S ribosomal subunit; part of the 5S rRNA/L5/L18/L25 subcomplex. Contacts the 5S and 23S rRNAs.

This is one of the proteins that bind and probably mediate the attachment of the 5S RNA into the large ribosomal subunit, where it forms part of the central protuberance. This chain is Large ribosomal subunit protein uL18, found in Pseudoalteromonas translucida (strain TAC 125).